Reading from the N-terminus, the 315-residue chain is Small ribosomal subunit protein uS9m (315 aa).

A mitochondrion-targeting transit peptide spans 1-42; sequence MMASLRHSITSALRSSRQGCSKSAQWQSLDQQFGALRISSRS. Positions 293-315 are disordered; that stretch reads PRKVERKKHGHVKARKMPTWVKR. Residues 296–315 are compositionally biased toward basic residues; sequence VERKKHGHVKARKMPTWVKR.

It belongs to the universal ribosomal protein uS9 family. Component of the mitochondrial small ribosomal subunit (mt-SSU). Mature N.crassa 74S mitochondrial ribosomes consist of a small (37S) and a large (54S) subunit. The 37S small subunit contains a 16S ribosomal RNA (16S mt-rRNA) and 32 different proteins. The 54S large subunit contains a 23S rRNA (23S mt-rRNA) and 42 different proteins.

The protein localises to the mitochondrion. Functionally, component of the mitochondrial ribosome (mitoribosome), a dedicated translation machinery responsible for the synthesis of mitochondrial genome-encoded proteins, including at least some of the essential transmembrane subunits of the mitochondrial respiratory chain. The mitoribosomes are attached to the mitochondrial inner membrane and translation products are cotranslationally integrated into the membrane. The chain is Small ribosomal subunit protein uS9m (mrp-9) from Neurospora crassa (strain ATCC 24698 / 74-OR23-1A / CBS 708.71 / DSM 1257 / FGSC 987).